Reading from the N-terminus, the 201-residue chain is Probable GTP-binding protein EngB (201 aa).

An EngB-type G domain is found at Ala21–Pro191. GTP-binding positions include Gly29–Ser36, Gly56–Ser60, Asp75–Gly78, Thr142–Asp145, and Ile168–Ser172. The Mg(2+) site is built by Ser36 and Thr58.

It belongs to the TRAFAC class TrmE-Era-EngA-EngB-Septin-like GTPase superfamily. EngB GTPase family. Requires Mg(2+) as cofactor.

In terms of biological role, necessary for normal cell division and for the maintenance of normal septation. The protein is Probable GTP-binding protein EngB of Maridesulfovibrio salexigens (strain ATCC 14822 / DSM 2638 / NCIMB 8403 / VKM B-1763) (Desulfovibrio salexigens).